Reading from the N-terminus, the 647-residue chain is Phosphomethylpyrimidine synthase (647 aa).

Residues Asn235, Met264, Tyr293, His329, Ser349–Gly351, Asp390–Arg393, and Glu429 contribute to the substrate site. Residue His433 participates in Zn(2+) binding. Tyr456 is a substrate binding site. His497 serves as a coordination point for Zn(2+). Positions 577, 580, and 585 each coordinate [4Fe-4S] cluster. The interval Lys623–Gly647 is disordered.

It belongs to the ThiC family. As to quaternary structure, homodimer. [4Fe-4S] cluster is required as a cofactor.

It catalyses the reaction 5-amino-1-(5-phospho-beta-D-ribosyl)imidazole + S-adenosyl-L-methionine = 4-amino-2-methyl-5-(phosphooxymethyl)pyrimidine + CO + 5'-deoxyadenosine + formate + L-methionine + 3 H(+). It functions in the pathway cofactor biosynthesis; thiamine diphosphate biosynthesis. Catalyzes the synthesis of the hydroxymethylpyrimidine phosphate (HMP-P) moiety of thiamine from aminoimidazole ribotide (AIR) in a radical S-adenosyl-L-methionine (SAM)-dependent reaction. This is Phosphomethylpyrimidine synthase from Vibrio vulnificus (strain CMCP6).